A 548-amino-acid chain; its full sequence is Chaperonin GroEL (548 aa).

Residues 30–33, K51, 87–91, G415, and D494 contribute to the ATP site; these read TLGP and DGTTT.

Belongs to the chaperonin (HSP60) family. Forms a cylinder of 14 subunits composed of two heptameric rings stacked back-to-back. Interacts with the co-chaperonin GroES.

It localises to the cytoplasm. It carries out the reaction ATP + H2O + a folded polypeptide = ADP + phosphate + an unfolded polypeptide.. In terms of biological role, together with its co-chaperonin GroES, plays an essential role in assisting protein folding. The GroEL-GroES system forms a nano-cage that allows encapsulation of the non-native substrate proteins and provides a physical environment optimized to promote and accelerate protein folding. In Oleispira antarctica, this protein is Chaperonin GroEL.